Consider the following 510-residue polypeptide: MSRPRLNIDGDTLKLEEILQVARHTVTVELAPAAAARVKAARDLVDRVAAGDTPSYGINTGFGTLAEVRIDKKDLRELQRNLILSHAAGVGSPLPLPEARVLLLLRCNVLAKGYSGIRPETLALALEMLNRDVVPVVPERGSVGASGDLAPLAHLALVFIGEGEAFYKGERLPAAQALERAGLKPVVLEAKEGLALVNGTQAMCAVGTLLQLRAEMLADLADLAGAMTLEGLLGSHKPFIPEIQDVRAHEGQKACAAHLRELLADSALVESHVNCSKVQDPYSLRCMPQVHGAAREGLSFARRILEVEINSATDNPLVFVETERIVSGGNFHGQPVSLALDVAAMALTQLSAISERRVEQLVNPALSGLPPFLAKNSGLNSGFMIAQVTSAALVAESRVLSHPASVDSIPSSAGREDHVSMGMTAALKGRQVADFTRSCLAIELLVAAQALDYRQPTRAGKGPQAAYELIRSKIPTMEKDRELHRDIAAVSALIDSGELLNAVRTATRGQ.

A cross-link (5-imidazolinone (Ala-Gly)) is located at residues 145–147; sequence ASG. At Ser-146 the chain carries 2,3-didehydroalanine (Ser).

Belongs to the PAL/histidase family. In terms of processing, contains an active site 4-methylidene-imidazol-5-one (MIO), which is formed autocatalytically by cyclization and dehydration of residues Ala-Ser-Gly.

The protein resides in the cytoplasm. It carries out the reaction L-histidine = trans-urocanate + NH4(+). It functions in the pathway amino-acid degradation; L-histidine degradation into L-glutamate; N-formimidoyl-L-glutamate from L-histidine: step 1/3. The sequence is that of Histidine ammonia-lyase from Stigmatella aurantiaca.